A 98-amino-acid chain; its full sequence is NADH-ubiquinone oxidoreductase chain 4L (98 aa).

The next 3 helical transmembrane spans lie at 1–21 (MMSINLNLIMAFSLALAGVLI), 28–48 (STLLCLEGMMLSLFILMALLI), and 59–79 (APLVLLVFSACEAGVGLALLV).

The protein belongs to the complex I subunit 4L family. Core subunit of respiratory chain NADH dehydrogenase (Complex I) which is composed of 45 different subunits.

The protein localises to the mitochondrion inner membrane. The enzyme catalyses a ubiquinone + NADH + 5 H(+)(in) = a ubiquinol + NAD(+) + 4 H(+)(out). Core subunit of the mitochondrial membrane respiratory chain NADH dehydrogenase (Complex I) which catalyzes electron transfer from NADH through the respiratory chain, using ubiquinone as an electron acceptor. Part of the enzyme membrane arm which is embedded in the lipid bilayer and involved in proton translocation. The polypeptide is NADH-ubiquinone oxidoreductase chain 4L (MT-ND4L) (Pseudocheirus peregrinus (Common ring-tailed possum)).